The sequence spans 215 residues: Proapoptotic nucleolar protein 1 (215 aa).

Positions 35–215 (RKGTPTARCL…RLPAPRSAST (181 aa)) are disordered. The span at 169 to 180 (PRPPQHLSPPQP) shows a compositional bias: pro residues. The necessary for nucleolar localization stretch occupies residues 185–215 (MGAAEGSRRADTHHARRRRRARLPAPRSAST).

As to expression, widely expressed.

It is found in the nucleus. The protein resides in the nucleolus. Apoptosis-inducing protein that modulates the tumor suppressor function of CDKN2A/p14ARF. Enhances the stability of CDKN2A/p14ARF protein by protecting it from degradation. May act as a tumor suppressor. The chain is Proapoptotic nucleolar protein 1 from Homo sapiens (Human).